We begin with the raw amino-acid sequence, 296 residues long: Cyclin-dependent kinase 1 (296 aa).

Positions 5–288 (FQKLEKIGEG…AKNGLSHKYF (284 aa)) constitute a Protein kinase domain. ATP contacts are provided by residues 11–19 (IGEGTYGVV) and Lys34. The active-site Proton acceptor is Asp130.

Belongs to the protein kinase superfamily. CMGC Ser/Thr protein kinase family. CDC2/CDKX subfamily.

It localises to the nucleus. It catalyses the reaction L-seryl-[protein] + ATP = O-phospho-L-seryl-[protein] + ADP + H(+). The catalysed reaction is L-threonyl-[protein] + ATP = O-phospho-L-threonyl-[protein] + ADP + H(+). Functionally, cyclin-dependent kinase that acts as a master regulator of the mitotic and meiotic cell cycles. In Encephalitozoon cuniculi (strain GB-M1) (Microsporidian parasite), this protein is Cyclin-dependent kinase 1.